The sequence spans 70 residues: Small ribosomal subunit protein bS21 (70 aa).

This sequence belongs to the bacterial ribosomal protein bS21 family.

The sequence is that of Small ribosomal subunit protein bS21 from Methylibium petroleiphilum (strain ATCC BAA-1232 / LMG 22953 / PM1).